The chain runs to 682 residues: Methionine--tRNA ligase (682 aa).

Positions 15-25 match the 'HIGH' region motif; it reads PYANGAIHLGH. Positions 146, 149, 159, and 162 each coordinate Zn(2+). The short motif at 331–335 is the 'KMSKS' region element; sequence KMSKS. Residue K334 participates in ATP binding. In terms of domain architecture, tRNA-binding spans 580–682; the sequence is DFAKLDMRVA…SGVTAGMQVK (103 aa).

It belongs to the class-I aminoacyl-tRNA synthetase family. MetG type 1 subfamily. In terms of assembly, homodimer. The cofactor is Zn(2+).

The protein localises to the cytoplasm. The catalysed reaction is tRNA(Met) + L-methionine + ATP = L-methionyl-tRNA(Met) + AMP + diphosphate. Its function is as follows. Is required not only for elongation of protein synthesis but also for the initiation of all mRNA translation through initiator tRNA(fMet) aminoacylation. The chain is Methionine--tRNA ligase from Haemophilus influenzae (strain ATCC 51907 / DSM 11121 / KW20 / Rd).